The following is a 658-amino-acid chain: tRNA 5-methylaminomethyl-2-thiouridine biosynthesis bifunctional protein MnmC (658 aa).

The tract at residues 1 to 236 (MIPELPHAQL…KWEVLRGEFL (236 aa)) is tRNA (mnm(5)s(2)U34)-methyltransferase. The segment at 265–658 (IGGGLAGCAS…ALRRLIRGKA (394 aa)) is FAD-dependent cmnm(5)s(2)U34 oxidoreductase.

In the N-terminal section; belongs to the methyltransferase superfamily. tRNA (mnm(5)s(2)U34)-methyltransferase family. This sequence in the C-terminal section; belongs to the DAO family. Requires FAD as cofactor.

It is found in the cytoplasm. It carries out the reaction 5-aminomethyl-2-thiouridine(34) in tRNA + S-adenosyl-L-methionine = 5-methylaminomethyl-2-thiouridine(34) in tRNA + S-adenosyl-L-homocysteine + H(+). Functionally, catalyzes the last two steps in the biosynthesis of 5-methylaminomethyl-2-thiouridine (mnm(5)s(2)U) at the wobble position (U34) in tRNA. Catalyzes the FAD-dependent demodification of cmnm(5)s(2)U34 to nm(5)s(2)U34, followed by the transfer of a methyl group from S-adenosyl-L-methionine to nm(5)s(2)U34, to form mnm(5)s(2)U34. The sequence is that of tRNA 5-methylaminomethyl-2-thiouridine biosynthesis bifunctional protein MnmC from Pseudomonas fluorescens (strain ATCC BAA-477 / NRRL B-23932 / Pf-5).